Consider the following 429-residue polypeptide: Ribonuclease E/G-like protein (429 aa).

Mg(2+)-binding residues include D290 and D332.

This sequence belongs to the RNase E/G family. Mg(2+) is required as a cofactor.

It localises to the plastid. Its subcellular location is the chloroplast stroma. Its function is as follows. Involved in intercistronic processing of primary transcripts from chloroplast operons. The endonucleolytic activity of the enzyme depends on the number of phosphates at the 5' end, is inhibited by structured RNA, and preferentially cleaves A/U-rich sequences. This chain is Ribonuclease E/G-like protein (rne), found in Guillardia theta (Cryptophyte).